A 228-amino-acid polypeptide reads, in one-letter code: Octanoyltransferase (228 aa).

Residues 31 to 212 (GETDGILILL…KFSEVFGIHF (182 aa)) form the BPL/LPL catalytic domain. Substrate contacts are provided by residues 76–83 (RGGKITFH), 143–145 (AIG), and 156–158 (GIA). The Acyl-thioester intermediate role is filled by cysteine 174.

This sequence belongs to the LipB family.

It localises to the cytoplasm. The catalysed reaction is octanoyl-[ACP] + L-lysyl-[protein] = N(6)-octanoyl-L-lysyl-[protein] + holo-[ACP] + H(+). Its pathway is protein modification; protein lipoylation via endogenous pathway; protein N(6)-(lipoyl)lysine from octanoyl-[acyl-carrier-protein]: step 1/2. Functionally, catalyzes the transfer of endogenously produced octanoic acid from octanoyl-acyl-carrier-protein onto the lipoyl domains of lipoate-dependent enzymes. Lipoyl-ACP can also act as a substrate although octanoyl-ACP is likely to be the physiological substrate. The sequence is that of Octanoyltransferase from Thermoanaerobacter sp. (strain X514).